Consider the following 676-residue polypeptide: MEKNLPDIFFFPNCVNVFSYKYSQDEFSNMSKTERDSFSLAVFPVIKHRWHNAHVVKHKGIYKVSTEARGKKVSPPSLGKPAHINLTTKQYIYSEHTISFECYSFLKCITNTEINSFDEYILRGLLEAGNSLQIFSNSVGKRTDTIGVLGNKYPFSKIPLASLTPKAQREIFSAWISHRPVVLTGGTGVGKTSQVPKLLLWFNYLFGGFSTLDKITDFHERPVILSLPRIALVRLHSNTILKSLGFKVLDGSPISLRYGSIPEELINKQPKKYGIVFSTHKLSLTKLFSYGTLIIDEVHEHDQIGDIIIAVARKHHTKIDSMFLMTATLEDDRERLKVFLPNPAFIHIPGDTLFKISEVFIHNKINPSSRMAYIEEEKRNLVTAIQMYTPPDGSSGIVFVASVAQCHEYKSYLEKRLPYDMYIIHGKVLDIDEILEKVYSSPNVSIIISTPYLESSVTIRNVTHIYDMGRVFVPAPFGGSQEFISKSMRDQRKGRVGRVNPGTYVYFYDLSYMKSIQRIDSEFLHNYILYANKFNLTLPEDLFIIPTNLDILWRTKEYIDSFDISTETWNKLLSNYYMKMIEYAKLYVLSPILAEELDNFERTGELTSIVREAILSLNLRIKILNFKHKDDDTYIHFCKILFGVYNGTNATIYYHRPLTGYMNMISDTIFVPVDNN.

A Helicase ATP-binding domain is found at 172–347; it reads FSAWISHRPV…VFLPNPAFIH (176 aa). 185 to 192 is an ATP binding site; sequence GGTGVGKT. A DEXH box motif is present at residues 296-299; it reads DEVH. Residues 366 to 535 enclose the Helicase C-terminal domain; that stretch reads NPSSRMAYIE…NYILYANKFN (170 aa).

Belongs to the DEAD box helicase family. DEAH subfamily. In terms of assembly, monomer.

It localises to the virion. It carries out the reaction ATP + H2O = ADP + phosphate + H(+). Functionally, NTP-dependent helicase that catalyzes unidirectional unwinding of 3'tailed duplex RNAs and plays an important role during transcription of early mRNAs, presumably by preventing R-loop formation behind the elongating RNA polymerase. Might also play a role in the export of newly synthesized mRNA chains out of the core into the cytoplasm. Required for replication and propagation of viral particles. The protein is RNA helicase NPH-II (OPG084) of Vaccinia virus (strain Copenhagen) (VACV).